The sequence spans 427 residues: UDP-N-acetyl-D-mannosamine dehydrogenase (427 aa).

NAD(+) is bound by residues tyrosine 19, isoleucine 20, aspartate 39, arginine 44, threonine 91, and threonine 130. Positions 155, 156, 207, 211, 214, 245, 247, and 258 each coordinate UDP-N-acetyl-alpha-D-mannosaminouronate. Catalysis depends on lysine 207, which acts as the Proton donor/acceptor. The active-site Nucleophile is cysteine 261. UDP-N-acetyl-alpha-D-mannosaminouronate-binding residues include tyrosine 318 and lysine 319. Arginine 326 serves as a coordination point for NAD(+). Lysine 404 serves as a coordination point for UDP-N-acetyl-alpha-D-mannosaminouronate.

It belongs to the UDP-glucose/GDP-mannose dehydrogenase family. In terms of assembly, homotetramer; probably dimer of dimers.

The enzyme catalyses UDP-N-acetyl-alpha-D-mannosamine + 2 NAD(+) + H2O = UDP-N-acetyl-alpha-D-mannosaminouronate + 2 NADH + 3 H(+). Catalyzes the four-electron oxidation of UDP-N-acetyl-D-mannosamine (UDP-ManNAc), reducing NAD(+) and releasing UDP-N-acetylmannosaminuronic acid (UDP-ManNAcA). This chain is UDP-N-acetyl-D-mannosamine dehydrogenase (wecC), found in Methanococcus vannielii (strain ATCC 35089 / DSM 1224 / JCM 13029 / OCM 148 / SB).